Reading from the N-terminus, the 63-residue chain is Small ribosomal subunit protein eS17 (63 aa).

It belongs to the eukaryotic ribosomal protein eS17 family.

This chain is Small ribosomal subunit protein eS17, found in Methanococcus maripaludis (strain DSM 14266 / JCM 13030 / NBRC 101832 / S2 / LL).